A 356-amino-acid polypeptide reads, in one-letter code: L-Lys-D/L-Arg epimerase (356 aa).

Substrate is bound by residues T135 and 160-162 (KVK). Residues D190, E216, and D241 each contribute to the Mg(2+) site. Residues K266, D296, and 319–321 (DLD) contribute to the substrate site.

It belongs to the mandelate racemase/muconate lactonizing enzyme family. It depends on Mg(2+) as a cofactor.

In terms of biological role, catalyzes the epimerization of L-Lys-L-Arg to L-Lys-D-Arg. Can also catalyze the epimerization of other cationic dipeptides, such as L-Arg-L-Arg, L-Lys-L-Lys and L-Lys-L-His, but with lower efficiency (in vitro). This chain is L-Lys-D/L-Arg epimerase, found in Methylococcus capsulatus (strain ATCC 33009 / NCIMB 11132 / Bath).